The chain runs to 69 residues: Putative membrane protein insertion efficiency factor (69 aa).

Belongs to the UPF0161 family.

It localises to the cell inner membrane. Functionally, could be involved in insertion of integral membrane proteins into the membrane. This is Putative membrane protein insertion efficiency factor from Geobacter metallireducens (strain ATCC 53774 / DSM 7210 / GS-15).